The primary structure comprises 290 residues: ATP synthase gamma chain (290 aa).

The protein belongs to the ATPase gamma chain family. As to quaternary structure, F-type ATPases have 2 components, CF(1) - the catalytic core - and CF(0) - the membrane proton channel. CF(1) has five subunits: alpha(3), beta(3), gamma(1), delta(1), epsilon(1). CF(0) has three main subunits: a, b and c.

The protein localises to the cell inner membrane. Produces ATP from ADP in the presence of a proton gradient across the membrane. The gamma chain is believed to be important in regulating ATPase activity and the flow of protons through the CF(0) complex. The polypeptide is ATP synthase gamma chain (Dictyoglomus turgidum (strain DSM 6724 / Z-1310)).